The primary structure comprises 493 residues: Dipeptide permease D (493 aa).

A run of 13 helical transmembrane segments spans residues 14-34 (VVALQIWEYFSFYGMRALLIL), 49-69 (ELFSAYCSLVYVTPILGGYLA), 91-111 (LVLGASEIAPTFLYLSLAIIV), 138-158 (GGFSLLYAAGNIGSIVAPIAC), 167-187 (WAMGFALAAIGMLAGLVIFLC), 212-232 (NWGWLLILLVAAPLLITVLFW), 235-255 (WSVYALIVATAIGLVVLAKIY), 267-287 (LGLIVTLTLFSMLFWAFAQQG), 312-332 (MFQSVNAFAVMLCGVVLAWLV), 344-364 (IWGKFALGLGLMSAGFCILTL), 379-399 (LMVLGLAVMGFAELFIDPVAM), 413-433 (VLTGIYMLLSGAIANYLAGVI), and 458-478 (VFEQITWGALACVGVVLLIWL).

This sequence belongs to the major facilitator superfamily. Proton-dependent oligopeptide transporter (POT/PTR) (TC 2.A.17) family. DtpD subfamily.

The protein resides in the cell inner membrane. Functionally, probable proton-dependent permease that transports dipeptides. The sequence is that of Dipeptide permease D from Salmonella typhimurium (strain 14028s / SGSC 2262).